Here is a 254-residue protein sequence, read N- to C-terminus: tRNA (guanine-N(7)-)-methyltransferase (254 aa).

The disordered stretch occupies residues 1–34; it reads MNTNTPAHPPEGAPLSEATQAALASAEHAPDSPG. S-adenosyl-L-methionine contacts are provided by glutamate 87, glutamate 112, aspartate 139, and aspartate 162. Residue aspartate 162 is part of the active site. Substrate is bound by residues lysine 166, aspartate 198, and 233 to 236; that span reads TKFE.

This sequence belongs to the class I-like SAM-binding methyltransferase superfamily. TrmB family.

It catalyses the reaction guanosine(46) in tRNA + S-adenosyl-L-methionine = N(7)-methylguanosine(46) in tRNA + S-adenosyl-L-homocysteine. It participates in tRNA modification; N(7)-methylguanine-tRNA biosynthesis. Its function is as follows. Catalyzes the formation of N(7)-methylguanine at position 46 (m7G46) in tRNA. The protein is tRNA (guanine-N(7)-)-methyltransferase of Bordetella pertussis (strain Tohama I / ATCC BAA-589 / NCTC 13251).